Reading from the N-terminus, the 165-residue chain is Large ribosomal subunit protein uL10 (165 aa).

Belongs to the universal ribosomal protein uL10 family. As to quaternary structure, part of the ribosomal stalk of the 50S ribosomal subunit. The N-terminus interacts with L11 and the large rRNA to form the base of the stalk. The C-terminus forms an elongated spine to which L12 dimers bind in a sequential fashion forming a multimeric L10(L12)X complex.

Forms part of the ribosomal stalk, playing a central role in the interaction of the ribosome with GTP-bound translation factors. In Pectobacterium carotovorum subsp. carotovorum (strain PC1), this protein is Large ribosomal subunit protein uL10.